Reading from the N-terminus, the 668-residue chain is UvrABC system protein B (668 aa).

The Helicase ATP-binding domain occupies 27–413; that stretch reads AGVQAGHRFQ…STQVVEQIIR (387 aa). ATP is bound at residue 40 to 47; the sequence is GATGTGKT. The Beta-hairpin motif lies at 93-116; that stretch reads YYDYYQPEAYIPVTDTYIEKSASI. The Helicase C-terminal domain maps to 430–596; the sequence is QVDDLYGEIR…PIVKKTSNAI (167 aa). Residues 628–663 enclose the UVR domain; that stretch reads PPLIQDLEAKMKAAAQELAFEEAARYRDQIKRLRDR.

The protein belongs to the UvrB family. Forms a heterotetramer with UvrA during the search for lesions. Interacts with UvrC in an incision complex.

Its subcellular location is the cytoplasm. In terms of biological role, the UvrABC repair system catalyzes the recognition and processing of DNA lesions. A damage recognition complex composed of 2 UvrA and 2 UvrB subunits scans DNA for abnormalities. Upon binding of the UvrA(2)B(2) complex to a putative damaged site, the DNA wraps around one UvrB monomer. DNA wrap is dependent on ATP binding by UvrB and probably causes local melting of the DNA helix, facilitating insertion of UvrB beta-hairpin between the DNA strands. Then UvrB probes one DNA strand for the presence of a lesion. If a lesion is found the UvrA subunits dissociate and the UvrB-DNA preincision complex is formed. This complex is subsequently bound by UvrC and the second UvrB is released. If no lesion is found, the DNA wraps around the other UvrB subunit that will check the other stand for damage. In Thermosynechococcus vestitus (strain NIES-2133 / IAM M-273 / BP-1), this protein is UvrABC system protein B.